The chain runs to 427 residues: Flotillin-1 (427 aa).

Phosphoserine occurs at positions 19, 163, and 385. Threonine 387 carries the post-translational modification Phosphothreonine.

This sequence belongs to the band 7/mec-2 family. Flotillin subfamily. Heterooligomeric complex of flotillin-1 and flotillin-2 and caveolin-1 and caveolin-2. Interacts with ECPAS.

Its subcellular location is the cell membrane. It is found in the endosome. It localises to the membrane. The protein resides in the caveola. The protein localises to the melanosome. Its subcellular location is the membrane raft. In terms of biological role, may act as a scaffolding protein within caveolar membranes, functionally participating in formation of caveolae or caveolae-like vesicles. The polypeptide is Flotillin-1 (FLOT1) (Sus scrofa (Pig)).